The following is a 109-amino-acid chain: Nucleoid-associated protein SG0690 (109 aa).

The tract at residues 1–23 is disordered; the sequence is MFGKGGMGNLMKQAQQMQEKMQR.

It belongs to the YbaB/EbfC family. Homodimer.

It localises to the cytoplasm. The protein localises to the nucleoid. Functionally, binds to DNA and alters its conformation. May be involved in regulation of gene expression, nucleoid organization and DNA protection. The chain is Nucleoid-associated protein SG0690 from Sodalis glossinidius (strain morsitans).